We begin with the raw amino-acid sequence, 1262 residues long: Putative late blight resistance protein homolog R1B-23 (1262 aa).

Coiled coils occupy residues 364–384 and 475–496; these read DSLAFLKNQLQVIQTKFESMQ and RMNEEIVGFEDVIETLRKKLLN. The 287-residue stretch at 475 to 761 folds into the NB-ARC domain; the sequence is RMNEEIVGFE…ISESFIKSCE (287 aa). 508–515 provides a ligand contact to ATP; it reads GMPGLGKT. LRR repeat units follow at residues 890–914, 933–961, 1036–1059, 1064–1083, 1084–1112, and 1133–1157; these read FKFLKVLDLEHQVVIDSIPTELFYL, LWNLETLILNRTSAATGKTLLLPSTVWDM, PIRLEMLKLHQSNIFKPISFCISA, YLELSGFYLDSQYLSETADH, LKHLEVLKLYYVEFGDHREWKVSNGMFPQ, and FPNLEQLVLRRCRHLMEIPSCFMDI. One can recognise an HMA domain in the interval 1181–1248; it reads ETQVEDNQNT…KLRNVAYADE (68 aa).

Belongs to the disease resistance NB-LRR family.

It localises to the cytoplasm. Its subcellular location is the membrane. In terms of biological role, confers resistance to late blight (Phytophthora infestans) races carrying the avirulence gene Avr1. Resistance proteins guard the plant against pathogens that contain an appropriate avirulence protein via an indirect interaction with this avirulence protein. That triggers a defense system including the hypersensitive response, which restricts the pathogen growth. This Solanum demissum (Wild potato) protein is Putative late blight resistance protein homolog R1B-23 (R1B-23).